Reading from the N-terminus, the 339-residue chain is Phenylalanine--tRNA ligase alpha subunit (339 aa).

E254 lines the Mg(2+) pocket.

It belongs to the class-II aminoacyl-tRNA synthetase family. Phe-tRNA synthetase alpha subunit type 1 subfamily. As to quaternary structure, tetramer of two alpha and two beta subunits. The cofactor is Mg(2+).

The protein localises to the cytoplasm. The catalysed reaction is tRNA(Phe) + L-phenylalanine + ATP = L-phenylalanyl-tRNA(Phe) + AMP + diphosphate + H(+). The polypeptide is Phenylalanine--tRNA ligase alpha subunit (Dictyoglomus turgidum (strain DSM 6724 / Z-1310)).